The primary structure comprises 691 residues: MARSPVEPSAGQPAKRAAWLRAELERANYAYYVLDQPDLPDAEYDRLFAELQQIEAEHPDLVTPDSPTQRVGGEVASGFTPVVHDTPMLSLNNGFSDDDVVAFDKRVADGLDKPTDLAGTVTEPVEYACELKFDGLAISLRYENGRFVQASTRGDGTTGEDVTENIRTVRSIPLTLKGKRVPRMLDVRGEVLMFRRDFARLNERQRAAGQREFANPRNAAAGSLRQLDSKITASRPLSFFAYGIGVLDGVEMPDTHSSLLDWYETLGLPVNRERAVVRGAAGLLEFFHSVGARRESLPYDIDGVVYKVNRRDEQDRLGFVSRAPRFALAHKFPAQEALTKLVAIDVQVGRTGAITPVARLEPVFVGGATVTNATLHNEDEVRRKDIRIGDTVIVRRAGDVIPEVVSAVFDRRPADAREFVMPTECPECGSRVERLPDEAIARCTGGLFCPAQRKQALWHFAQRRALDIDGLGEKIIDQLVEQNLVRTPADLFNLGFSTLVELDRFAEKSAQNLIDSLEKAKHTTLARFIYALGIRHVGESTAKDLAKHFGSLDPIMDASIDELLEVNDVGPIVAESIHQFFAEAHNRTVIEQLRAKGKVTWPEGPPAPRAPQGVLAGKTVVLTGTLPTLTREAAKEMLEAAGAKVAGSVSKKTDYVVAGADAGSKLAKAEELGIPVLDEAGMHKLLEGHAR.

NAD(+)-binding positions include 41 to 45 (DAEYD), 90 to 91 (SL), and E130. The active-site N6-AMP-lysine intermediate is the K132. NAD(+)-binding residues include R153, E190, K307, and K331. The Zn(2+) site is built by C425, C428, C443, and C449. Positions 610–691 (APQGVLAGKT…MHKLLEGHAR (82 aa)) constitute a BRCT domain.

Belongs to the NAD-dependent DNA ligase family. LigA subfamily. The cofactor is Mg(2+). Requires Mn(2+) as cofactor.

The enzyme catalyses NAD(+) + (deoxyribonucleotide)n-3'-hydroxyl + 5'-phospho-(deoxyribonucleotide)m = (deoxyribonucleotide)n+m + AMP + beta-nicotinamide D-nucleotide.. Functionally, DNA ligase that catalyzes the formation of phosphodiester linkages between 5'-phosphoryl and 3'-hydroxyl groups in double-stranded DNA using NAD as a coenzyme and as the energy source for the reaction. It is essential for DNA replication and repair of damaged DNA. The polypeptide is DNA ligase (Burkholderia thailandensis (strain ATCC 700388 / DSM 13276 / CCUG 48851 / CIP 106301 / E264)).